Here is a 349-residue protein sequence, read N- to C-terminus: Arginine kinase (349 aa).

The Phosphagen kinase N-terminal domain occupies 3–85 (DLAELWEKVS…LGPVILDYHK (83 aa)). 58 to 62 (GVGVY) is a binding site for substrate. The region spanning 113–349 (WIVSTRVRVG…EEIIKLEKAA (237 aa)) is the Phosphagen kinase C-terminal domain. ATP contacts are provided by residues 116-120 (STRVR) and H179. E219 serves as a coordination point for substrate. R223 contributes to the ATP binding site. Position 265 (C265) interacts with substrate. ATP-binding positions include 274 to 278 (RASVH) and 302 to 307 (RGIHGE). E307 serves as a coordination point for substrate.

Belongs to the ATP:guanido phosphotransferase family.

The catalysed reaction is L-arginine + ATP = N(omega)-phospho-L-arginine + ADP + H(+). The chain is Arginine kinase from Liolophura japonica (Chiton).